Reading from the N-terminus, the 297-residue chain is Transmembrane protein 178A (297 aa).

The signal sequence occupies residues 1-25 (MEPRALVTALSLGLSLCSLGLLVTA). Over 26–179 (IFTDHWYETD…LLHLRRITAG (154 aa)) the chain is Extracellular. Positions 41 to 57 (ESCERSRAGADPPDQKN) are enriched in basic and acidic residues. Residues 41–84 (ESCERSRAGADPPDQKNRLMPLSHLPLRDSPPLGRRLLPGGPGR) are disordered. A compositionally biased stretch (low complexity) spans 68–79 (RDSPPLGRRLLP). N-linked (GlcNAc...) asparagine glycosylation occurs at asparagine 158. The helical transmembrane segment at 180–200 (FLGMAVAVLLCGCIVATVSFF) threads the bilayer. Residues 201 to 208 (WEESLTQH) are Cytoplasmic-facing. A helical membrane pass occupies residues 209 to 229 (VAGLLFLMTGIFCTISLCTYA). Over 230-257 (ASISYDLNRLPKLIYSLPADVEHGYSWS) the chain is Extracellular. The chain crosses the membrane as a helical span at residues 258–278 (IFCAWCSLGFIVAAGGLCIAY). Over 279 to 297 (PFISRTKIAQLKSGRDSTV) the chain is Cytoplasmic.

This sequence belongs to the TMEM178 family. In terms of assembly, interacts with STIM1.

The protein resides in the endoplasmic reticulum membrane. Acts as a negative regulator of osteoclast differentiation in basal and inflammatory conditions by regulating TNFSF11-induced Ca (2+) fluxes, thereby controlling the induction of NFATC1. In Homo sapiens (Human), this protein is Transmembrane protein 178A (TMEM178A).